A 502-amino-acid polypeptide reads, in one-letter code: Bone morphogenetic protein receptor type-1B (502 aa).

The segment covering 1 to 10 (MPLLSSSKLS) has biased composition (polar residues). The first 13 residues, 1 to 13 (MPLLSSSKLSMES), serve as a signal peptide directing secretion. Positions 1-27 (MPLLSSSKLSMESRKEDSEGTAPAPPQ) are disordered. Residues 14–126 (RKEDSEGTAP…DFAEGNIHHK (113 aa)) lie on the Extracellular side of the membrane. 5 cysteine pairs are disulfide-bonded: Cys32/Cys53, Cys34/Cys38, Cys47/Cys71, Cys81/Cys95, and Cys96/Cys102. An N-linked (GlcNAc...) asparagine glycan is attached at Asn44. Residues 127 to 148 (ALLISVTVCSILLVLIIIFCYF) traverse the membrane as a helical segment. Topologically, residues 149–502 (RYKRQEARPR…KMSESQDIKL (354 aa)) are cytoplasmic. One can recognise a GS domain in the interval 174-203 (ESLKDLIEQSQSSGSGSGLPLLVQRTIAKQ). Positions 204 to 494 (IQMVKQIGKG…LRVKKTLAKM (291 aa)) constitute a Protein kinase domain. ATP-binding positions include 210 to 218 (IGKGRYGEV) and Lys231. Asp332 (proton acceptor) is an active-site residue.

The protein belongs to the protein kinase superfamily. TKL Ser/Thr protein kinase family. TGFB receptor subfamily. It depends on Mg(2+) as a cofactor. Mn(2+) serves as cofactor. In terms of processing, autophosphorylated.

It is found in the cell membrane. The enzyme catalyses L-threonyl-[receptor-protein] + ATP = O-phospho-L-threonyl-[receptor-protein] + ADP + H(+). It catalyses the reaction L-seryl-[receptor-protein] + ATP = O-phospho-L-seryl-[receptor-protein] + ADP + H(+). On ligand binding, forms a receptor complex consisting of two type II and two type I transmembrane serine/threonine kinases. Type II receptors phosphorylate and activate type I receptors which autophosphorylate, then bind and activate SMAD transcription. Positively regulates chondrocyte differentiation. In Gallus gallus (Chicken), this protein is Bone morphogenetic protein receptor type-1B (BMPR1B).